A 310-amino-acid chain; its full sequence is Probable manganese-dependent inorganic pyrophosphatase (310 aa).

6 residues coordinate Mn(2+): His9, Asp13, Asp15, Asp76, His98, and Asp150.

Belongs to the PPase class C family. Requires Mn(2+) as cofactor.

Its subcellular location is the cytoplasm. It carries out the reaction diphosphate + H2O = 2 phosphate + H(+). The chain is Probable manganese-dependent inorganic pyrophosphatase from Streptococcus thermophilus (strain CNRZ 1066).